The sequence spans 174 residues: Large ribosomal subunit protein uL18 (174 aa).

Belongs to the universal ribosomal protein uL18 family. Part of the 50S ribosomal subunit. Contacts the 5S and 23S rRNAs.

This is one of the proteins that bind and probably mediate the attachment of the 5S RNA into the large ribosomal subunit, where it forms part of the central protuberance. This Methanosarcina acetivorans (strain ATCC 35395 / DSM 2834 / JCM 12185 / C2A) protein is Large ribosomal subunit protein uL18.